The sequence spans 838 residues: Periplasmic nitrate reductase (838 aa).

Residues 1 to 29 (MDMSRRTLLKAQAAAAAAAVAGIDLPAEA) constitute a signal peptide (tat-type signal). One can recognise a 4Fe-4S Mo/W bis-MGD-type domain in the interval 40-96 (LKWSKAPCRFCGTGCGVMVGVKDGRVVATHGDMQAEVNRGLNCVKGYFLSKIMYGAD). Residues Cys-47, Cys-50, Cys-54, and Cys-82 each contribute to the [4Fe-4S] cluster site. Residues Lys-84, Gln-151, Asn-176, Cys-180, 213 to 220 (WGSNMAEM), 244 to 248 (STYEH), 263 to 265 (GTD), Met-374, Gln-378, Asn-484, 510 to 511 (SD), Lys-533, Asp-560, and 720 to 729 (TGRVLEHWHS) each bind Mo-bis(molybdopterin guanine dinucleotide). Phe-796 is a binding site for substrate. Mo-bis(molybdopterin guanine dinucleotide) is bound by residues Asn-804 and Lys-821.

Belongs to the prokaryotic molybdopterin-containing oxidoreductase family. NasA/NapA/NarB subfamily. In terms of assembly, component of the periplasmic nitrate reductase NapAB complex composed of NapA and NapB. [4Fe-4S] cluster serves as cofactor. Mo-bis(molybdopterin guanine dinucleotide) is required as a cofactor. Post-translationally, predicted to be exported by the Tat system. The position of the signal peptide cleavage has not been experimentally proven.

Its subcellular location is the periplasm. The enzyme catalyses 2 Fe(II)-[cytochrome] + nitrate + 2 H(+) = 2 Fe(III)-[cytochrome] + nitrite + H2O. Functionally, catalytic subunit of the periplasmic nitrate reductase complex NapAB. Receives electrons from NapB and catalyzes the reduction of nitrate to nitrite. This Methylobacterium sp. (strain 4-46) protein is Periplasmic nitrate reductase.